Consider the following 940-residue polypeptide: Glutamate receptor 2.9 (940 aa).

Residues 1 to 23 form the signal peptide; sequence MKTNNTFLSYFVCGFLLMGVGLG. Residues 24 to 566 are Extracellular-facing; the sequence is QNQTSEIKVG…DTWVFLEPWS (543 aa). Asn-25, Asn-39, Asn-115, Asn-338, Asn-345, and Asn-528 each carry an N-linked (GlcNAc...) asparagine glycan. Residues 567–587 form a helical membrane-spanning segment; it reads LELWVTTGCFFVFIGFVVWLF. Over 588 to 596 the chain is Cytoplasmic; it reads EHRVNTDFR. The chain crosses the membrane as a helical span at residues 597 to 617; the sequence is GPPQYQIGTSLWFSFSTMVFA. Residues 618–628 lie on the Cytoplasmic side of the membrane; the sequence is HRENVVSNLAR. A helical membrane pass occupies residues 629-649; sequence FVVVVWCFVVLVLTQSYTASL. At 650-811 the chain is on the extracellular side; that stretch reads TSFLTVQSLQ…NRLNLSSFLG (162 aa). N-linked (GlcNAc...) asparagine glycosylation is found at Asn-771, Asn-776, and Asn-805. A helical transmembrane segment spans residues 812–832; sequence LFLIAGTAISFSLLVFVALFL. The Cytoplasmic segment spans residues 833-940; sequence YEHRHTLGDD…ESDIECRVEQ (108 aa). Disordered stretches follow at residues 876 to 900 and 914 to 940; these read ISSPMTHKTPSPSTVQITPWPQSPS and PSEERFTTQPIIHHEDGESDIECRVEQ.

Belongs to the glutamate-gated ion channel (TC 1.A.10.1) family. May form heteromers. As to expression, expressed predominantly in roots.

The protein resides in the membrane. Functionally, glutamate-gated receptor that probably acts as a non-selective cation channel. May be involved in light-signal transduction and calcium homeostasis via the regulation of calcium influx into cells. This Arabidopsis thaliana (Mouse-ear cress) protein is Glutamate receptor 2.9 (GLR2.9).